Here is a 461-residue protein sequence, read N- to C-terminus: Trigger factor (461 aa).

Residues 166 to 245 (GDFANIDLTA…VNSVKAEELP (80 aa)) enclose the PPIase FKBP-type domain.

It belongs to the FKBP-type PPIase family. Tig subfamily.

The protein resides in the cytoplasm. It catalyses the reaction [protein]-peptidylproline (omega=180) = [protein]-peptidylproline (omega=0). In terms of biological role, involved in protein export. Acts as a chaperone by maintaining the newly synthesized protein in an open conformation. Functions as a peptidyl-prolyl cis-trans isomerase. The protein is Trigger factor of Bifidobacterium animalis subsp. lactis (strain AD011).